The chain runs to 346 residues: Phosphoribosylformylglycinamidine cyclo-ligase (346 aa).

This sequence belongs to the AIR synthase family.

It localises to the cytoplasm. The enzyme catalyses 2-formamido-N(1)-(5-O-phospho-beta-D-ribosyl)acetamidine + ATP = 5-amino-1-(5-phospho-beta-D-ribosyl)imidazole + ADP + phosphate + H(+). It participates in purine metabolism; IMP biosynthesis via de novo pathway; 5-amino-1-(5-phospho-D-ribosyl)imidazole from N(2)-formyl-N(1)-(5-phospho-D-ribosyl)glycinamide: step 2/2. This is Phosphoribosylformylglycinamidine cyclo-ligase from Erwinia tasmaniensis (strain DSM 17950 / CFBP 7177 / CIP 109463 / NCPPB 4357 / Et1/99).